A 446-amino-acid polypeptide reads, in one-letter code: GTPase Der (446 aa).

EngA-type G domains are found at residues 2–166 (TVVA…PEAP) and 179–354 (IRVS…RQYN). GTP is bound by residues 8-15 (GRPNVGKS), 55-59 (DTAGF), 118-121 (NKID), 185-192 (GRPNVGKS), 232-236 (DTAGI), and 297-300 (NKWD). One can recognise a KH-like domain in the interval 355-440 (QRVTTGIVNR…PIRLIFRPRQ (86 aa)).

It belongs to the TRAFAC class TrmE-Era-EngA-EngB-Septin-like GTPase superfamily. EngA (Der) GTPase family. In terms of assembly, associates with the 50S ribosomal subunit.

In terms of biological role, GTPase that plays an essential role in the late steps of ribosome biogenesis. The polypeptide is GTPase Der (Syntrophobacter fumaroxidans (strain DSM 10017 / MPOB)).